Here is a 139-residue protein sequence, read N- to C-terminus: GSK3B-interacting protein (139 aa).

The tract at residues 1–22 (METDCNPMELSSMSGFEEGSEL) is disordered. The interval 41-45 (VNDVL) is required for PRKAR2A interaction; contributes to a protective effect against H(2)O(2)-induced apoptosis. Positions 115-139 (SPAYREAFGNALLQRLEALKRDGQS) are interaction with GSK3B and acts as a GSK3B inhibitor.

The protein belongs to the GSKIP family. As to quaternary structure, forms a complex composed of PRKAR2A or PRKAR2B, GSK3B and GSKIP through GSKIP interaction; facilitates PKA-induced phosphorylation of GSK3B leading to GSK3B inactivation; recruits DNM1L through GSK3B for PKA-mediated phosphorylation of DNM1L; promotes beta-catenin degradation through GSK3B-induced phosphorylation of beta-catenin; stabilizes beta-catenin and enhances Wnt-induced signaling through PKA-induced phosphorylation of beta-catenin. Interacts with GSK3B; induces GSK3B-mediated phosphorylation of GSKIP and inhibits GSK3B kinase activity. In terms of processing, phosphorylated by GSK3B. As to expression, detected in heart, brain, placenta, liver, skeletal muscle, kidney, testis, lung and pancreas.

It is found in the cytoplasm. The protein localises to the nucleus. A-kinase anchoring protein for GSK3B and PKA that regulates or facilitates their kinase activity towards their targets. The ternary complex enhances Wnt-induced signaling by facilitating the GSK3B- and PKA-induced phosphorylation of beta-catenin leading to beta-catenin degradation and stabilization respectively. Upon cAMP activation, the ternary complex contributes to neuroprotection against oxidative stress-induced apoptosis by facilitating the PKA-induced phosphorylation of DML1 and PKA-induced inactivation of GSK3B. During neurite outgrowth promotes neuron proliferation; while increases beta-catenin-induced transcriptional activity through GSK3B kinase activity inhibition, reduces N-cadherin level to promote cell cycle progression. This is GSK3B-interacting protein from Homo sapiens (Human).